A 107-amino-acid chain; its full sequence is UPF0045 protein in glkA 3'region (107 aa).

The protein belongs to the UPF0045 family.

The sequence is that of UPF0045 protein in glkA 3'region (dglA) from Staphylococcus xylosus.